A 302-amino-acid chain; its full sequence is 33 kDa chaperonin (302 aa).

Disulfide bonds link Cys-234-Cys-236 and Cys-267-Cys-270.

It belongs to the HSP33 family. Post-translationally, under oxidizing conditions two disulfide bonds are formed involving the reactive cysteines. Under reducing conditions zinc is bound to the reactive cysteines and the protein is inactive.

The protein resides in the cytoplasm. In terms of biological role, redox regulated molecular chaperone. Protects both thermally unfolding and oxidatively damaged proteins from irreversible aggregation. Plays an important role in the bacterial defense system toward oxidative stress. The polypeptide is 33 kDa chaperonin (Neisseria gonorrhoeae (strain ATCC 700825 / FA 1090)).